Here is a 318-residue protein sequence, read N- to C-terminus: Biotin synthase (318 aa).

The 227-residue stretch at 44-270 (LCGDAVNLCS…INPTANIRLA (227 aa)) folds into the Radical SAM core domain. Positions 62, 66, and 69 each coordinate [4Fe-4S] cluster. Residues Ser106, Cys138, Cys198, and Arg268 each contribute to the [2Fe-2S] cluster site.

It belongs to the radical SAM superfamily. Biotin synthase family. As to quaternary structure, homodimer. [4Fe-4S] cluster serves as cofactor. Requires [2Fe-2S] cluster as cofactor.

It catalyses the reaction (4R,5S)-dethiobiotin + (sulfur carrier)-SH + 2 reduced [2Fe-2S]-[ferredoxin] + 2 S-adenosyl-L-methionine = (sulfur carrier)-H + biotin + 2 5'-deoxyadenosine + 2 L-methionine + 2 oxidized [2Fe-2S]-[ferredoxin]. It functions in the pathway cofactor biosynthesis; biotin biosynthesis; biotin from 7,8-diaminononanoate: step 2/2. In terms of biological role, catalyzes the conversion of dethiobiotin (DTB) to biotin by the insertion of a sulfur atom into dethiobiotin via a radical-based mechanism. The polypeptide is Biotin synthase (Alkaliphilus metalliredigens (strain QYMF)).